Reading from the N-terminus, the 106-residue chain is Glycoprotein GP16 (106 aa).

Post-translationally, glycosylated.

It localises to the host cytoplasm. Its function is as follows. May be involved in formation or transport of the nucleocapsid-containing vesicles around the nuclear membrane. This chain is Glycoprotein GP16 (GP16), found in Autographa californica nuclear polyhedrosis virus (AcMNPV).